Reading from the N-terminus, the 361-residue chain is Chorismate synthase (361 aa).

Arg47 contacts NADP(+). FMN contacts are provided by residues 124-126 (RAS), Gly286, 301-305 (KPTAT), and Arg327.

Belongs to the chorismate synthase family. Homotetramer. Requires FMNH2 as cofactor.

The catalysed reaction is 5-O-(1-carboxyvinyl)-3-phosphoshikimate = chorismate + phosphate. The protein operates within metabolic intermediate biosynthesis; chorismate biosynthesis; chorismate from D-erythrose 4-phosphate and phosphoenolpyruvate: step 7/7. In terms of biological role, catalyzes the anti-1,4-elimination of the C-3 phosphate and the C-6 proR hydrogen from 5-enolpyruvylshikimate-3-phosphate (EPSP) to yield chorismate, which is the branch point compound that serves as the starting substrate for the three terminal pathways of aromatic amino acid biosynthesis. This reaction introduces a second double bond into the aromatic ring system. This Akkermansia muciniphila (strain ATCC BAA-835 / DSM 22959 / JCM 33894 / BCRC 81048 / CCUG 64013 / CIP 107961 / Muc) protein is Chorismate synthase.